A 435-amino-acid chain; its full sequence is tRNA-2-methylthio-N(6)-dimethylallyladenosine synthase (435 aa).

Residues 5–120 (KKLFIETLGC…ISEVLHKERA (116 aa)) form the MTTase N-terminal domain. Residues cysteine 14, cysteine 51, cysteine 83, cysteine 152, cysteine 156, and cysteine 159 each contribute to the [4Fe-4S] cluster site. A Radical SAM core domain is found at 138–372 (RTSPYKAYIN…NLAVNILDEK (235 aa)). The region spanning 374–435 (KTHLGKIYRV…RTILSGEIVG (62 aa)) is the TRAM domain.

The protein belongs to the methylthiotransferase family. MiaB subfamily. As to quaternary structure, monomer. Requires [4Fe-4S] cluster as cofactor.

It localises to the cytoplasm. It catalyses the reaction N(6)-dimethylallyladenosine(37) in tRNA + (sulfur carrier)-SH + AH2 + 2 S-adenosyl-L-methionine = 2-methylsulfanyl-N(6)-dimethylallyladenosine(37) in tRNA + (sulfur carrier)-H + 5'-deoxyadenosine + L-methionine + A + S-adenosyl-L-homocysteine + 2 H(+). Functionally, catalyzes the methylthiolation of N6-(dimethylallyl)adenosine (i(6)A), leading to the formation of 2-methylthio-N6-(dimethylallyl)adenosine (ms(2)i(6)A) at position 37 in tRNAs that read codons beginning with uridine. This is tRNA-2-methylthio-N(6)-dimethylallyladenosine synthase from Sulfurimonas denitrificans (strain ATCC 33889 / DSM 1251) (Thiomicrospira denitrificans (strain ATCC 33889 / DSM 1251)).